Reading from the N-terminus, the 592-residue chain is Calnexin (592 aa).

The first 20 residues, 1 to 20 (MEGKWLLCMLLVLGTAIVEA), serve as a signal peptide directing secretion. The Lumenal segment spans residues 21–481 (HDGHDDDVID…QMIEAAEERP (461 aa)). Ca(2+) contacts are provided by Ser-74 and Asp-117. At Lys-137 the chain carries N6-acetyllysine. An intrachain disulfide couples Cys-160 to Cys-194. Residues Tyr-164, Lys-166, Tyr-185, and Asp-192 each coordinate an alpha-D-glucoside. The segment at 260-345 (GNLLNDMTPP…AEKPEDWDED (86 aa)) is disordered. Over residues 274–319 (REIEDPEDRKPEDWDERPKIPDPEAVKPDDWDEDAPAKIPDEEATK) the composition is skewed to basic and acidic residues. The segment at 276–409 (IEDPEDRKPE…RKIPNPDFFE (134 aa)) is p domain (Extended arm). A run of 5 repeats spans residues 278–290 (DPED…WDER), 295–307 (DPEA…WDED), 314–326 (DEEA…WLDD), 333–345 (DPDA…WDED), and 348–358 (GEWEAPQIANP). 4 X approximate repeats stretches follow at residues 278–345 (DPED…WDED) and 348–405 (GEWE…IPNP). Over residues 323-345 (WLDDEPEYVPDPDAEKPEDWDED) the composition is skewed to acidic residues. The tract at residues 326–359 (DEPEYVPDPDAEKPEDWDEDMDGEWEAPQIANPK) is interaction with PPIB. Cys-360 and Cys-366 are disulfide-bonded. A run of 3 repeats spans residues 367-377 (GVWQRPMIDNP), 381-391 (GKWKPPMIDNP), and 395-405 (GIWKPRKIPNP). Glu-425 lines the an alpha-D-glucoside pocket. A Ca(2+)-binding site is contributed by Asp-436. Residues 482-502 (WLWVVYILTVALPVFLVILFC) traverse the membrane as a helical segment. S-palmitoyl cysteine attachment occurs at residues Cys-502 and Cys-503. Over 503 to 592 (CSGKKQTSAM…SPRNRKPRRE (90 aa)) the chain is Cytoplasmic. The sufficient to mediate interaction with SGIP1 stretch occupies residues 503–592 (CSGKKQTSAM…SPRNRKPRRE (90 aa)). Positions 511 to 592 (AMEYKKTDAP…SPRNRKPRRE (82 aa)) are disordered. A compositionally biased stretch (acidic residues) spans 525–547 (KEEEEEKEEEKDKGDEEEEGEEK). Ser-554 carries the phosphoserine modification. Phosphothreonine is present on Thr-562. Residue Ser-564 is modified to Phosphoserine; by MAPK3. Ser-583 is subject to Phosphoserine.

The protein belongs to the calreticulin family. As to quaternary structure, interacts with MAPK3/ERK1. Interacts with KCNH2. Associates with ribosomes. Interacts with SGIP1; involved in negative regulation of endocytosis. The palmitoylated form interacts with the ribosome-translocon complex component SSR1, promoting efficient folding of glycoproteins. Interacts with SERPINA2P/SERPINA2 and with the S and Z variants of SERPINA1. Interacts with PPIB. Interacts with ZNRF4. Interacts with SMIM22. Interacts with TMX2. Interacts with TMEM35A/NACHO and CHRNA7. Interacts with reticulophagy regulators RETREG2 and RETREG3. Interacts with DNM1L; may form part of a larger protein complex at the ER-mitochondrial interface during mitochondrial fission. Interacts with ADAM7. Post-translationally, phosphorylated at Ser-564 by MAPK3/ERK1. Phosphorylation by MAPK3/ERK1 increases its association with ribosomes. In terms of processing, palmitoylation by DHHC6 leads to the preferential localization to the perinuclear rough ER. It mediates the association of calnexin with the ribosome-translocon complex (RTC) which is required for efficient folding of glycosylated proteins. Ubiquitinated, leading to proteasomal degradation. Probably ubiquitinated by ZNRF4.

The protein localises to the endoplasmic reticulum membrane. Its subcellular location is the mitochondrion membrane. The protein resides in the melanosome membrane. Its function is as follows. Calcium-binding protein that interacts with newly synthesized monoglucosylated glycoproteins in the endoplasmic reticulum. It may act in assisting protein assembly and/or in the retention within the ER of unassembled protein subunits. It seems to play a major role in the quality control apparatus of the ER by the retention of incorrectly folded proteins. Associated with partial T-cell antigen receptor complexes that escape the ER of immature thymocytes, it may function as a signaling complex regulating thymocyte maturation. Additionally it may play a role in receptor-mediated endocytosis at the synapse. In Pongo abelii (Sumatran orangutan), this protein is Calnexin (CANX).